Consider the following 184-residue polypeptide: Large ribosomal subunit protein uL6 (184 aa).

It belongs to the universal ribosomal protein uL6 family. In terms of assembly, part of the 50S ribosomal subunit.

Its function is as follows. This protein binds to the 23S rRNA, and is important in its secondary structure. It is located near the subunit interface in the base of the L7/L12 stalk, and near the tRNA binding site of the peptidyltransferase center. The protein is Large ribosomal subunit protein uL6 of Pyrococcus furiosus (strain ATCC 43587 / DSM 3638 / JCM 8422 / Vc1).